Consider the following 94-residue polypeptide: Co-chaperonin GroES (94 aa).

It belongs to the GroES chaperonin family. In terms of assembly, heptamer of 7 subunits arranged in a ring. Interacts with the chaperonin GroEL.

The protein localises to the cytoplasm. Its function is as follows. Together with the chaperonin GroEL, plays an essential role in assisting protein folding. The GroEL-GroES system forms a nano-cage that allows encapsulation of the non-native substrate proteins and provides a physical environment optimized to promote and accelerate protein folding. GroES binds to the apical surface of the GroEL ring, thereby capping the opening of the GroEL channel. The protein is Co-chaperonin GroES of Bacillus cereus (strain ATCC 14579 / DSM 31 / CCUG 7414 / JCM 2152 / NBRC 15305 / NCIMB 9373 / NCTC 2599 / NRRL B-3711).